The primary structure comprises 126 residues: Aspartate 1-decarboxylase (126 aa).

The Schiff-base intermediate with substrate; via pyruvic acid role is filled by Ser-25. Pyruvic acid (Ser) is present on Ser-25. Thr-57 serves as a coordination point for substrate. Tyr-58 serves as the catalytic Proton donor. 73–75 lines the substrate pocket; that stretch reads GAA.

The protein belongs to the PanD family. As to quaternary structure, heterooctamer of four alpha and four beta subunits. The cofactor is pyruvate. Post-translationally, is synthesized initially as an inactive proenzyme, which is activated by self-cleavage at a specific serine bond to produce a beta-subunit with a hydroxyl group at its C-terminus and an alpha-subunit with a pyruvoyl group at its N-terminus.

It localises to the cytoplasm. It carries out the reaction L-aspartate + H(+) = beta-alanine + CO2. The protein operates within cofactor biosynthesis; (R)-pantothenate biosynthesis; beta-alanine from L-aspartate: step 1/1. Functionally, catalyzes the pyruvoyl-dependent decarboxylation of aspartate to produce beta-alanine. The polypeptide is Aspartate 1-decarboxylase (Pseudomonas fluorescens).